Consider the following 360-residue polypeptide: Peptide chain release factor 1 (360 aa).

N5-methylglutamine is present on Q235.

It belongs to the prokaryotic/mitochondrial release factor family. Methylated by PrmC. Methylation increases the termination efficiency of RF1.

It localises to the cytoplasm. Its function is as follows. Peptide chain release factor 1 directs the termination of translation in response to the peptide chain termination codons UAG and UAA. The sequence is that of Peptide chain release factor 1 from Bordetella parapertussis (strain 12822 / ATCC BAA-587 / NCTC 13253).